The primary structure comprises 442 residues: Mimosinase, chloroplastic (442 aa).

The transit peptide at 1 to 35 directs the protein to the chloroplast; it reads MALPSAFLNPFVPSPVTANPRTKFARVGKGFNVSC. Residues Y103, R105, G133, M134, S252, and T254 each contribute to the pyridoxal 5'-phosphate site. Residue K255 is modified to N6-(pyridoxal phosphate)lysine.

Belongs to the trans-sulfuration enzymes family. Forms homodimers. May form homotetramers from two homodimers. Pyridoxal 5'-phosphate is required as a cofactor.

Its subcellular location is the plastid. The protein localises to the chloroplast. The enzyme catalyses L-mimosine + H2O = 3-hydroxy-4H-pyrid-4-one + pyruvate + NH4(+). The catalysed reaction is L,L-cystathionine + H2O = L-homocysteine + pyruvate + NH4(+). It catalyses the reaction an S-substituted L-cysteine + H2O = a thiol + pyruvate + NH4(+). Catalyzes the degradation of mimosine, which is a toxic secondary metabolite found in all Mimosa and Leucaena species. Catalyzes the degradation of cystathionine, but seems to have lower preference toward cystathionine over mimosine. This Mimosa pudica (Sensitive plant) protein is Mimosinase, chloroplastic.